The primary structure comprises 78 residues: Putative permease-like protein YdzE (78 aa).

Transmembrane regions (helical) follow at residues 2 to 22 (YLGI…LQLL), 27 to 47 (GGLF…ILLG), and 49 to 69 (QIGG…LLVI). An EamA domain is found at 2–70 (YLGIVSTACA…ILSGVLLVIK (69 aa)).

It belongs to the EamA transporter family.

It is found in the cell membrane. The sequence is that of Putative permease-like protein YdzE (ydzE) from Bacillus subtilis (strain 168).